We begin with the raw amino-acid sequence, 468 residues long: UDP-N-acetylmuramoyl-L-alanine--L-glutamate ligase (468 aa).

122-128 (GTKGKST) is an ATP binding site.

It belongs to the MurCDEF family. MurD2 subfamily.

Its subcellular location is the cytoplasm. It catalyses the reaction UDP-N-acetyl-alpha-D-muramoyl-L-alanine + L-glutamate + ATP = UDP-N-acetyl-alpha-D-muramoyl-L-alanyl-L-glutamate + ADP + phosphate + H(+). The protein operates within cell wall biogenesis; peptidoglycan biosynthesis. In terms of biological role, cell wall formation. Catalyzes the addition of L-glutamate to the nucleotide precursor UDP-N-acetylmuramoyl-L-alanine. Has weak activity with D-glutamate. In Xanthomonas oryzae pv. oryzae (strain MAFF 311018), this protein is UDP-N-acetylmuramoyl-L-alanine--L-glutamate ligase.